Reading from the N-terminus, the 412-residue chain is MQILKENASNQRFVTRESEVNRICCGFNGFQLGERLRRDMKTSSITTLVVNTTTYFFKDTTELIDFKEKRIDLYEYARYGNPTTMALEEKISVLEGAESTLVMASGMYASNVMLLALVPTNGHIVATKDCYKETRIFMENFLTKLGITVTFIDSDDIAGLQTLVNNHEVSLFFTESPTNPFLRCVDIKLVSKICHRRGTLVCIDATIATPINQKTLALGADLVHHSATKYIGGHNDFLAGSISGSMELVSKIRNLHKLLGGTLNPNAAYLLIRGMKTMHLRVRQQNSTGMKMAQVLEAHPKVSRVYYLGLPSHPEHLIAKRQMTGIGGLISFEIDGDLKTTIKFIDALKIPYLAASFGGCESLVDQLATGIWDIPREERLKDGFQDNLVRFSFGIEDFEDIKADVLQALETI.

Residues Tyr76, Arg78, Gly106, Met107, Tyr131, Ser226, and Thr228 each contribute to the pyridoxal 5'-phosphate site. At Lys229 the chain carries N6-(pyridoxal phosphate)lysine.

Belongs to the trans-sulfuration enzymes family. Requires pyridoxal 5'-phosphate as cofactor.

The catalysed reaction is O-phospho-L-homoserine + L-cysteine = L,L-cystathionine + phosphate. It carries out the reaction O-succinyl-L-homoserine + L-cysteine = L,L-cystathionine + succinate + H(+). The protein operates within amino-acid biosynthesis; L-methionine biosynthesis via de novo pathway; L-cystathionine from O-succinyl-L-homoserine: step 1/1. Catalyzes the first committed step of methionine (Met) biosynthesis. Catalyzes the formation of L-cystathionine from homoserine esters and L-cysteine, via a gamma-replacement reaction. The sequence is that of Probable cystathionine gamma-synthase 2 from Arabidopsis thaliana (Mouse-ear cress).